Consider the following 329-residue polypeptide: 4-hydroxy-3-methylbut-2-enyl diphosphate reductase 1 (329 aa).

Residue Cys29 participates in [4Fe-4S] cluster binding. The (2E)-4-hydroxy-3-methylbut-2-enyl diphosphate site is built by His58 and His95. The dimethylallyl diphosphate site is built by His58 and His95. Isopentenyl diphosphate is bound by residues His58 and His95. Cys117 contributes to the [4Fe-4S] cluster binding site. Residue His145 participates in (2E)-4-hydroxy-3-methylbut-2-enyl diphosphate binding. His145 serves as a coordination point for dimethylallyl diphosphate. His145 provides a ligand contact to isopentenyl diphosphate. Catalysis depends on Glu147, which acts as the Proton donor. Thr185 contributes to the (2E)-4-hydroxy-3-methylbut-2-enyl diphosphate binding site. Cys215 is a binding site for [4Fe-4S] cluster. (2E)-4-hydroxy-3-methylbut-2-enyl diphosphate contacts are provided by Ser243, Ser244, Asn245, and Ser287. Residues Ser243, Ser244, Asn245, and Ser287 each contribute to the dimethylallyl diphosphate site. Residues Ser243, Ser244, Asn245, and Ser287 each coordinate isopentenyl diphosphate.

The protein belongs to the IspH family. [4Fe-4S] cluster serves as cofactor.

The enzyme catalyses isopentenyl diphosphate + 2 oxidized [2Fe-2S]-[ferredoxin] + H2O = (2E)-4-hydroxy-3-methylbut-2-enyl diphosphate + 2 reduced [2Fe-2S]-[ferredoxin] + 2 H(+). The catalysed reaction is dimethylallyl diphosphate + 2 oxidized [2Fe-2S]-[ferredoxin] + H2O = (2E)-4-hydroxy-3-methylbut-2-enyl diphosphate + 2 reduced [2Fe-2S]-[ferredoxin] + 2 H(+). It functions in the pathway isoprenoid biosynthesis; dimethylallyl diphosphate biosynthesis; dimethylallyl diphosphate from (2E)-4-hydroxy-3-methylbutenyl diphosphate: step 1/1. The protein operates within isoprenoid biosynthesis; isopentenyl diphosphate biosynthesis via DXP pathway; isopentenyl diphosphate from 1-deoxy-D-xylulose 5-phosphate: step 6/6. Its function is as follows. Catalyzes the conversion of 1-hydroxy-2-methyl-2-(E)-butenyl 4-diphosphate (HMBPP) into a mixture of isopentenyl diphosphate (IPP) and dimethylallyl diphosphate (DMAPP). Acts in the terminal step of the DOXP/MEP pathway for isoprenoid precursor biosynthesis. In Mycobacterium tuberculosis (strain CDC 1551 / Oshkosh), this protein is 4-hydroxy-3-methylbut-2-enyl diphosphate reductase 1.